A 656-amino-acid polypeptide reads, in one-letter code: MQYVGRAFDSVTKTWNAINPSTLSGAIDVIVVEQEDKTLACSPFHVRFGKFSLLLPSDKKVEFSVNGQLTGFNMKLGDGGEAFFVFATENAVPRELQTSPIVSPTTSPKQTPSINVTEPQDLELDKVSQDHEKDQSNTYLMEDGYEFPLTRDLIRRSKSDADQTPPTGFKHLRHSSCLEMAGSDRTPSMPATTLADLRLLQKAKELGKRLSGKELPTRVGDNGDVMLDMTGYKSSAANINIAELARETFKDEFPMIEKLLREDEEGNLWFHASEDAKKFAEVYGHSPPASPSRTPASPKSDSALMDEDSDLSRRHSLSEQSLSPVSESYPQYAKTLRLTSDQLRSLNLKPGKNELSFGVNGGKAICTANLFFWKHNDPVVISDIDGTITKSDALGHMFTLIGKDWTHAGVAKLYTDITNNGYKIMYLTSRSVGQADSTRHYLRNIEQNGYSLPDGPVILSPDRTMAALHREVILRKPEVFKMACLRDLCNIFALPVPRTPFYAGFGNRITDAISYNHVRVPPTRIFTINSAGEVHIELLQRSGHRSSYVYMNELVDHFFPPIEVSTRDEVSSFTDVNFWRSPLLELSDEEEDDTNKSTSKSPKTPKNTKFGYQEFEGIDEEDAQDYSPSPLIKSFNELMFEGEEDEEGEEDVENAV.

Phosphoserine occurs at positions 99 and 103. Polar residues predominate over residues Ser-99 to Glu-118. The interval Ser-99–Asp-121 is disordered. Thr-106 is subject to Phosphothreonine. A phosphoserine mark is found at Ser-107, Ser-159, and Ser-286. Disordered stretches follow at residues Val-282 to Ser-328 and Ser-587 to Val-656. Residues Pro-291–Ser-300 are compositionally biased toward low complexity. Phosphoserine occurs at positions 318, 321, and 587. Over residues Ser-318 to Ser-328 the composition is skewed to polar residues. The span at Lys-596–Lys-609 shows a compositional bias: low complexity. Residues Phe-640–Val-656 are compositionally biased toward acidic residues.

It belongs to the lipin family. As to quaternary structure, interacts with dis3, pim1 and nup189.

Its function is as follows. May have a role in the maintenance of the nuclear envelope structure and in minichromosome stability. The sequence is that of Nuclear elongation and deformation protein 1 (ned1) from Schizosaccharomyces pombe (strain 972 / ATCC 24843) (Fission yeast).